Reading from the N-terminus, the 351-residue chain is MTSSENSSVSNPLRTDVLIVGAGPVGLFAAFEAGVIGLSCQIVDGIERPGGQCIELYPDKPIYDIPAVPSCTARDLVDRLVEQCRPFNPPMHLGQRIERLDPLEGGRWLARTDKGHTFDAAAILIAAGNGAFVPQRLALDEAARLEGRYVHYRVSDMNGLAGTNVVVAGGGDSALDWALALRSVARHVTLVHRRSGFSATDSSVARLRQAVAAGEMDFVVGTIARLNSPVGPLESIEVRQIGGSVCLDADQLLVLYGLVADLGPIVNWGIAIQAGRIVVDTSYYESSRPGIFAAGDIACYPNKQKLILCGFHEASLALRKAYNYAFPDKKRVHVHSSYDAKLAERVAAVHP.

FAD-binding residues include D44, Q52, Y57, I97, F132, D296, and S337.

This sequence belongs to the ferredoxin--NADP reductase type 2 family. In terms of assembly, homodimer. FAD serves as cofactor.

The catalysed reaction is 2 reduced [2Fe-2S]-[ferredoxin] + NADP(+) + H(+) = 2 oxidized [2Fe-2S]-[ferredoxin] + NADPH. The protein is Ferredoxin--NADP reductase of Burkholderia vietnamiensis (strain G4 / LMG 22486) (Burkholderia cepacia (strain R1808)).